The sequence spans 217 residues: Vacuolar protein-sorting-associated protein 37 homolog 1 (217 aa).

Residues 1–49 form a disordered region; sequence MFNFWGSKDQQQGQSRPQEASSQSPWYSPSLVSSPSSSRPQSSGQISAQ. Over residues 8–20 the composition is skewed to polar residues; the sequence is KDQQQGQSRPQEA. Residues 21 to 47 show a composition bias toward low complexity; that stretch reads SSQSPWYSPSLVSSPSSSRPQSSGQIS. The region spanning 137–217 is the VPS37 C-terminal domain; it reads QEKLNELERQ…IHLAAKTSNI (81 aa).

The protein belongs to the VPS37 family. As to quaternary structure, component of the endosomal sorting required for transport complex I (ESCRT-I), composed of ELC, VPS28 and VPS37. Interacts with ELC.

The protein resides in the endosome. Its function is as follows. Component of the ESCRT-I complex (endosomal sorting complex required for transport I), a regulator of vesicular trafficking process. Required for the sorting of endocytic ubiquitinated cargos into multivesicular bodies (MVBs). In Arabidopsis thaliana (Mouse-ear cress), this protein is Vacuolar protein-sorting-associated protein 37 homolog 1 (VPS37-1).